Consider the following 119-residue polypeptide: Ribonuclease P protein component (119 aa).

The protein belongs to the RnpA family. In terms of assembly, consists of a catalytic RNA component (M1 or rnpB) and a protein subunit.

The catalysed reaction is Endonucleolytic cleavage of RNA, removing 5'-extranucleotides from tRNA precursor.. In terms of biological role, RNaseP catalyzes the removal of the 5'-leader sequence from pre-tRNA to produce the mature 5'-terminus. It can also cleave other RNA substrates such as 4.5S RNA. The protein component plays an auxiliary but essential role in vivo by binding to the 5'-leader sequence and broadening the substrate specificity of the ribozyme. In Cronobacter sakazakii (strain ATCC BAA-894) (Enterobacter sakazakii), this protein is Ribonuclease P protein component.